Here is a 397-residue protein sequence, read N- to C-terminus: Lysophospholipid transporter LplT (397 aa).

Topologically, residues 1–17 (MSESVHTNTSLWSKGMK) are periplasmic. A helical transmembrane segment spans residues 18–38 (AVIVAQFLSAFGDNALLFATL). The Cytoplasmic portion of the chain corresponds to 39–52 (ALLKAQFYPEWSQP). A helical membrane pass occupies residues 53–73 (ILQMVFVGAYILFAPFVGQVA). The Periplasmic portion of the chain corresponds to 74 to 90 (DSFAKGRVMMFANGLKL). A helical transmembrane segment spans residues 91–111 (LGAASICFGINPFLGYTLVGV). At 112–144 (GAAAYSPAKYGILGELTTGSKLVKANGLMEAST) the chain is on the cytoplasmic side. The helical transmembrane segment at 145 to 165 (IAAILLGSVAGGVLADWHVLV) threads the bilayer. A topological domain (periplasmic) is located at residue Ala166. A helical membrane pass occupies residues 167–187 (LAACALAYGGAVVANIYIPKL). Residues 188–226 (AAARPGQSWNLISMTRSFLNACTSLWRNGETRFSLVGTS) are Cytoplasmic-facing. Residues 227–247 (LFWGAGVTLRFLLVLWVPVAL) form a helical membrane-spanning segment. The Periplasmic portion of the chain corresponds to 248 to 256 (GITDNATPT). The helical transmembrane segment at 257 to 277 (YLNAMVAIGIVVGAGAAAKLV) threads the bilayer. Over 278–280 (TLE) the chain is Cytoplasmic. A helical transmembrane segment spans residues 281–301 (TVSRCMPAGILIGVVVLIFSL). Over 302-304 (QHE) the chain is Periplasmic. Residues 305–325 (LLPAYALLMLIGVLGGFFVVP) traverse the membrane as a helical segment. At 326–343 (LNALLQERGKKSVGAGNA) the chain is on the cytoplasmic side. A helical membrane pass occupies residues 344–364 (IAVQNLGENSAMLLMLGIYSL). Topologically, residues 365 to 366 (AV) are periplasmic. A helical membrane pass occupies residues 367 to 387 (MVGIPVVPIGIGFGALFALAI). At 388–397 (TALWIWQRRH) the chain is on the cytoplasmic side.

It belongs to the major facilitator superfamily. LplT (TC 2.A.1.42) family.

The protein localises to the cell inner membrane. In terms of biological role, catalyzes the facilitated diffusion of 2-acyl-glycero-3-phosphoethanolamine (2-acyl-GPE) into the cell. The protein is Lysophospholipid transporter LplT of Escherichia coli O7:K1 (strain IAI39 / ExPEC).